The primary structure comprises 207 residues: Porin MspD (207 aa).

The first 24 residues, 1–24 (MRYLVMMFALLVSVTLVSPRPANA), serve as a signal peptide directing secretion.

It belongs to the mycobacterial porin (TC 1.B.24) family. As to quaternary structure, octamers. Probably forms a goblet with the wide end on the exterior of the outer membrane and a central channel. It is not known if mixed oligomers of MspD with other Msp subunits form in vivo.

It is found in the cell outer membrane. The protein resides in the secreted. Its subcellular location is the cell wall. Its function is as follows. A backup porin induced when MspA, the major porin, is deleted. It probably forms a water-filled channel which favors the permeation of cations. There are about 2400 porins in wild-type, 800 in an mspA deletion and 150 in a double mspA-mspC deletion. This is Porin MspD (mspD) from Mycolicibacterium smegmatis (strain ATCC 700084 / mc(2)155) (Mycobacterium smegmatis).